Reading from the N-terminus, the 243-residue chain is Mannosyl-3-phosphoglycerate phosphatase (243 aa).

Asp-8 acts as the Nucleophile in catalysis. Mg(2+) is bound by residues Asp-8, Asp-10, Ser-169, and Asp-204.

The protein belongs to the HAD-like hydrolase superfamily. MPGP family. It depends on Mg(2+) as a cofactor.

It is found in the cytoplasm. The catalysed reaction is 2-O-(alpha-D-mannosyl)-3-phosphoglycerate + H2O = (2R)-2-O-(alpha-D-mannosyl)-glycerate + phosphate. It functions in the pathway carbohydrate biosynthesis; 2-(alpha-D-mannosyl)-D-glycerate biosynthesis; 2-(alpha-D-mannosyl)-D-glycerate from GDP-alpha-D-mannose (MPG route): step 2/2. Its function is as follows. Hydrolyzes mannosyl-3-phosphoglycerate (MPG) to form the osmolyte mannosylglycerate (MG). The enzyme is absolutely specific for MPG. This Pyrococcus horikoshii (strain ATCC 700860 / DSM 12428 / JCM 9974 / NBRC 100139 / OT-3) protein is Mannosyl-3-phosphoglycerate phosphatase.